Here is a 490-residue protein sequence, read N- to C-terminus: MVPVVALVGRPNVGKSTLFNRLTRTRDALVADFPGLTRDRKYGRAEVEGREFICIDTGGIDGTEDGVETRMAEQSLLAIEEADVVLFMVDARAGLMPADEAIAKHLRSREKPTFLVANKTDGLDPDQAVVDFYSLGLGEIYPIAASHGRGVLSLLEHVLLPWMDDVAPQEKVDEDAEYWAQFEAEQNGEEAPEDDFDPQSLPIKLAIVGRPNVGKSTLTNRILGEERVVVYDMPGTTRDSIYIPMERDEREYVLIDTAGVRKRGKITDAVEKFSVIKTLQAIEDANVVLLVIDAREGISDQDLSLLGFILNSGRSLVIVVNKWDGLSQEVKEQVKETLDFRLGFIDFARVHFISALHGSGVGNLFESVREAYDSSTRRVSTAMLTRIMTMAVEDHQPPLVRGRRVKLKYAHAGGYNPPIVVIHGNQVKDLPDSYKRYLMNYFRKSLEVMGTPIRIQFKEGENPYANKRNTLTPTQMRKRKRLMKHIKKSK.

EngA-type G domains follow at residues 3–166 (PVVA…MDDV) and 203–376 (IKLA…DSST). GTP contacts are provided by residues 9-16 (GRPNVGKS), 56-60 (DTGGI), 118-121 (NKTD), 209-216 (GRPNVGKS), 256-260 (DTAGV), and 321-324 (NKWD). The KH-like domain occupies 377-461 (RRVSTAMLTR…PIRIQFKEGE (85 aa)).

This sequence belongs to the TRAFAC class TrmE-Era-EngA-EngB-Septin-like GTPase superfamily. EngA (Der) GTPase family. As to quaternary structure, associates with the 50S ribosomal subunit.

Functionally, GTPase that plays an essential role in the late steps of ribosome biogenesis. The sequence is that of GTPase Der from Salmonella choleraesuis (strain SC-B67).